We begin with the raw amino-acid sequence, 296 residues long: uncharacterized protein (296 aa).

CBS domains lie at 176–232 (GIKE…DKKV) and 236–292 (MRRD…KFPE).

This is an uncharacterized protein from Methanocaldococcus jannaschii (strain ATCC 43067 / DSM 2661 / JAL-1 / JCM 10045 / NBRC 100440) (Methanococcus jannaschii).